The primary structure comprises 299 residues: Probable lipid kinase YegS (299 aa).

The DAGKc domain occupies 2–133; sequence ADLPASLLIL…IDIAQVNKET (132 aa). ATP is bound by residues Thr40, 66–72, and Thr95; that span reads GDGTINE. Positions 215, 218, and 220 each coordinate Mg(2+). Glu271 acts as the Proton acceptor in catalysis.

The protein belongs to the diacylglycerol/lipid kinase family. YegS lipid kinase subfamily. Mg(2+) is required as a cofactor. It depends on Ca(2+) as a cofactor.

The protein localises to the cytoplasm. Probably phosphorylates lipids; the in vivo substrate is unknown. The sequence is that of Probable lipid kinase YegS from Escherichia fergusonii (strain ATCC 35469 / DSM 13698 / CCUG 18766 / IAM 14443 / JCM 21226 / LMG 7866 / NBRC 102419 / NCTC 12128 / CDC 0568-73).